Consider the following 107-residue polypeptide: Iron-binding protein IscA (107 aa).

Fe cation contacts are provided by Cys-35, Cys-99, and Cys-101.

The protein belongs to the HesB/IscA family. As to quaternary structure, homodimer; may form tetramers and higher multimers. Fe cation serves as cofactor.

Is able to transfer iron-sulfur clusters to apo-ferredoxin. Multiple cycles of [2Fe2S] cluster formation and transfer are observed, suggesting that IscA acts catalytically. Recruits intracellular free iron so as to provide iron for the assembly of transient iron-sulfur cluster in IscU in the presence of IscS, L-cysteine and the thioredoxin reductase system TrxA/TrxB. In Enterobacter sp. (strain 638), this protein is Iron-binding protein IscA.